A 336-amino-acid polypeptide reads, in one-letter code: Polyadenylate-binding protein-interacting protein 12 (336 aa).

The disordered stretch occupies residues 14–47 (EAGGLISPSPPSSVTSQESGASSNNDHGGNGIHD). The span at 25–40 (SSVTSQESGASSNNDH) shows a compositional bias: polar residues. The PAM2-like motif lies at 75-85 (KLNPMAKEFIP). A Bipartite nuclear localization signal motif is present at residues 122–134 (RRKKSFGQQGKRR). 2 consecutive RRM domains span residues 150–225 (RTVY…PSKT) and 247–323 (RTIY…PSKT).

In terms of assembly, interacts with MPC. In terms of tissue distribution, expressed in roots, leaves, stems, flowers and siliques. Detected in flowers only in growing organs: gynoecium, petals, stamenal filaments, anther walls and ovules.

The protein localises to the nucleus. Binds nucleotic acids in vitro. The polypeptide is Polyadenylate-binding protein-interacting protein 12 (CID12) (Arabidopsis thaliana (Mouse-ear cress)).